The sequence spans 228 residues: MDSVKNILLEYGLRFQEPQIEKVDKYIEELLGVPYNLTAHRDLDSAVHKNVVEILLPLKEELKGTLLDVGSGNGVPGLILAIFFSKLKVVLLDSREKSVNFLRGVIEKLDLENVSVVKERAENFSKERREEFDYVTARAVARLNVLVEICTPALKTGGKLLFYKGPSYIEELKEAQRAMKELKVELEKVREYSLKTGERRALLILRKYESSPEKYPRRVGVPFKRPLL.

Residues Gly70, 121–122, and Arg138 contribute to the S-adenosyl-L-methionine site; that span reads AE.

Belongs to the methyltransferase superfamily. RNA methyltransferase RsmG family.

Its subcellular location is the cytoplasm. Its function is as follows. Specifically methylates the N7 position of a guanine in 16S rRNA. The sequence is that of Ribosomal RNA small subunit methyltransferase G from Thermotoga petrophila (strain ATCC BAA-488 / DSM 13995 / JCM 10881 / RKU-1).